We begin with the raw amino-acid sequence, 146 residues long: PTS system fructose-specific EIIA component (146 aa).

Residues 1–124 (MISVIISGHG…NLKAMSQQSF (124 aa)) enclose the PTS EIIA type-4 domain. His9 acts as the Tele-phosphohistidine intermediate in catalysis. His9 carries the phosphohistidine; by HPr modification.

The protein resides in the cytoplasm. Its function is as follows. The phosphoenolpyruvate-dependent sugar phosphotransferase system (sugar PTS), a major carbohydrate active transport system, catalyzes the phosphorylation of incoming sugar substrates concomitantly with their translocation across the cell membrane. The enzyme II LevDE PTS system is involved in fructose transport. In terms of biological role, levD and LevE act as negative regulators of the levanase operon. They may be involved in a PTS-mediated phosphorylation of a regulator. This is PTS system fructose-specific EIIA component from Bacillus subtilis (strain 168).